The primary structure comprises 330 residues: Ketol-acid reductoisomerase (NADP(+)) (330 aa).

Positions 1-181 (MKVFYDSDFK…GLSRAGVIQT (181 aa)) constitute a KARI N-terminal Rossmann domain. NADP(+) contacts are provided by residues 24-27 (YGSQ), Arg47, Ser52, and 82-85 (DELQ). His107 is a catalytic residue. Gly133 contributes to the NADP(+) binding site. The 146-residue stretch at 182–327 (TFKEETETDL…AKLRKMCGLE (146 aa)) folds into the KARI C-terminal knotted domain. 4 residues coordinate Mg(2+): Asp190, Glu194, Glu226, and Glu230. Substrate is bound at residue Ser251.

The protein belongs to the ketol-acid reductoisomerase family. Mg(2+) serves as cofactor.

The enzyme catalyses (2R)-2,3-dihydroxy-3-methylbutanoate + NADP(+) = (2S)-2-acetolactate + NADPH + H(+). The catalysed reaction is (2R,3R)-2,3-dihydroxy-3-methylpentanoate + NADP(+) = (S)-2-ethyl-2-hydroxy-3-oxobutanoate + NADPH + H(+). It participates in amino-acid biosynthesis; L-isoleucine biosynthesis; L-isoleucine from 2-oxobutanoate: step 2/4. Its pathway is amino-acid biosynthesis; L-valine biosynthesis; L-valine from pyruvate: step 2/4. In terms of biological role, involved in the biosynthesis of branched-chain amino acids (BCAA). Catalyzes an alkyl-migration followed by a ketol-acid reduction of (S)-2-acetolactate (S2AL) to yield (R)-2,3-dihydroxy-isovalerate. In the isomerase reaction, S2AL is rearranged via a Mg-dependent methyl migration to produce 3-hydroxy-3-methyl-2-ketobutyrate (HMKB). In the reductase reaction, this 2-ketoacid undergoes a metal-dependent reduction by NADPH to yield (R)-2,3-dihydroxy-isovalerate. In Methanococcus maripaludis (strain DSM 14266 / JCM 13030 / NBRC 101832 / S2 / LL), this protein is Ketol-acid reductoisomerase (NADP(+)).